The following is a 688-amino-acid chain: Translation initiation factor IF-2 (688 aa).

Basic and acidic residues-rich tracts occupy residues 53 to 62 (GKEKSEKTKE) and 86 to 95 (KRDDKNEKVN). Residues 53–100 (GKEKSEKTKEEDDEIETTAKNPIKESMNNKKSNKRDDKNEKVNTENAE) form a disordered region. A tr-type G domain is found at 187–354 (KRSPIITVMG…MILLSSEILE (168 aa)). The G1 stretch occupies residues 196-203 (GHVDHGKT). 196–203 (GHVDHGKT) is a binding site for GTP. Residues 221–225 (GITQH) form a G2 region. Residues 242–245 (DTPG) form a G3 region. Residues 242–246 (DTPGH) and 296–299 (NKID) contribute to the GTP site. Residues 296-299 (NKID) are G4. The tract at residues 332 to 334 (SAH) is G5.

The protein belongs to the TRAFAC class translation factor GTPase superfamily. Classic translation factor GTPase family. IF-2 subfamily.

It is found in the cytoplasm. One of the essential components for the initiation of protein synthesis. Protects formylmethionyl-tRNA from spontaneous hydrolysis and promotes its binding to the 30S ribosomal subunits. Also involved in the hydrolysis of GTP during the formation of the 70S ribosomal complex. The polypeptide is Translation initiation factor IF-2 (Clostridium botulinum (strain Kyoto / Type A2)).